We begin with the raw amino-acid sequence, 228 residues long: MTSIRSASTPVEVRRLGTLDYTSAWQLQRETADARVAGGPDTLLLLEHPPVYTAGKRTEPHERPLDGTPVVDTDRGGKITWHGPGQLVGYPIIGLTEPLDVVNFVRRLEESLITVCAELGLHTERVEGRSGVWVPADDLRPARKIGAIGIRVSRATTLHGFALNCDCDLSAFSSIIPCGITDAGVTSLTAELGRRVTVDEVADRVAAAVCDALDGRLPVGHHETLNVG.

The region spanning 37–217 is the BPL/LPL catalytic domain; it reads AGGPDTLLLL…AVCDALDGRL (181 aa). Substrate contacts are provided by residues 75–82, 147–149, and 160–162; these read RGGKITWH, AIG, and GFA. Catalysis depends on Cys178, which acts as the Acyl-thioester intermediate.

Belongs to the LipB family.

The protein localises to the cytoplasm. The enzyme catalyses octanoyl-[ACP] + L-lysyl-[protein] = N(6)-octanoyl-L-lysyl-[protein] + holo-[ACP] + H(+). It participates in protein modification; protein lipoylation via endogenous pathway; protein N(6)-(lipoyl)lysine from octanoyl-[acyl-carrier-protein]: step 1/2. Functionally, catalyzes the transfer of endogenously produced octanoic acid from octanoyl-acyl-carrier-protein onto the lipoyl domains of lipoate-dependent enzymes. Lipoyl-ACP can also act as a substrate although octanoyl-ACP is likely to be the physiological substrate. The chain is Octanoyltransferase from Mycolicibacterium smegmatis (strain ATCC 700084 / mc(2)155) (Mycobacterium smegmatis).